A 132-amino-acid chain; its full sequence is Agouti-signaling protein (132 aa).

Positions 1-22 (MDVTXLLLATLLVFLCCFAAYS) are cleaved as a signal peptide. Asn39 carries an N-linked (GlcNAc...) asparagine glycan. The interval 62-93 (ISRKEAENKRSSKKEASKQKVARPRTPLSVPC) is disordered. Over residues 64-79 (RKEAENKRSSKKEASK) the composition is skewed to basic and acidic residues. 5 cysteine pairs are disulfide-bonded: Cys93-Cys108, Cys100-Cys114, Cys107-Cys125, Cys111-Cys132, and Cys116-Cys123. The Agouti domain maps to 93-132 (CVSTRGSCKPPAPACCHPCASCQCRFFRSACSCRVINVNC).

The protein localises to the secreted. In terms of biological role, involved in the regulation of melanogenesis. The binding of ASP to MC1R precludes alpha-MSH initiated signaling and thus blocks production of cAMP, leading to a down-regulation of eumelanogenesis (brown/black pigment) and thus increasing synthesis of pheomelanin (yellow/red pigment). This Leontopithecus chrysomelas (Golden-headed lion tamarin) protein is Agouti-signaling protein (ASIP).